The chain runs to 1066 residues: Isoleucine--tRNA ligase (1066 aa).

The short motif at 49 to 59 is the 'HIGH' region element; the sequence is PYVSGAIHLGT. The 'KMSKS' region motif lies at 625-629; sequence KMSKS. Lysine 628 provides a ligand contact to ATP.

The protein belongs to the class-I aminoacyl-tRNA synthetase family. IleS type 2 subfamily. Monomer. Zn(2+) is required as a cofactor.

It is found in the cytoplasm. It catalyses the reaction tRNA(Ile) + L-isoleucine + ATP = L-isoleucyl-tRNA(Ile) + AMP + diphosphate. Functionally, catalyzes the attachment of isoleucine to tRNA(Ile). As IleRS can inadvertently accommodate and process structurally similar amino acids such as valine, to avoid such errors it has two additional distinct tRNA(Ile)-dependent editing activities. One activity is designated as 'pretransfer' editing and involves the hydrolysis of activated Val-AMP. The other activity is designated 'posttransfer' editing and involves deacylation of mischarged Val-tRNA(Ile). This Pyrococcus horikoshii (strain ATCC 700860 / DSM 12428 / JCM 9974 / NBRC 100139 / OT-3) protein is Isoleucine--tRNA ligase.